The primary structure comprises 283 residues: MRDNLFIYLQYLLPHALTSRLVSKLADSENKIIKNHLIKLAIKKFNINLVEAKETDISKYKSFNDFFIRELKDDLRPISNDKNVISSPADGVLSQFGTITDNSLIQAKGKLFSLESLIASSSTTNFTKFATIYLSPKDYHRVHMPIDGKLTKMVYIPGKLFSVNKITTSKVDNLFAKNERLICYFDTIIGEIAVIFVGALLVAGIETVWHGKIAPNYYKDIQTWDYNSAKFNIKFNKGDILGWFNFGSTVIILTSGNNVSFKFEENQNNIKIQVNQDLALITE.

Residues Asp90, His143, and Ser248 each act as charge relay system; for autoendoproteolytic cleavage activity in the active site. The Schiff-base intermediate with substrate; via pyruvic acid; for decarboxylase activity role is filled by Ser248. Ser248 bears the Pyruvic acid (Ser); by autocatalysis mark.

The protein belongs to the phosphatidylserine decarboxylase family. PSD-B subfamily. Prokaryotic type I sub-subfamily. Heterodimer of a large membrane-associated beta subunit and a small pyruvoyl-containing alpha subunit. The cofactor is pyruvate. Is synthesized initially as an inactive proenzyme. Formation of the active enzyme involves a self-maturation process in which the active site pyruvoyl group is generated from an internal serine residue via an autocatalytic post-translational modification. Two non-identical subunits are generated from the proenzyme in this reaction, and the pyruvate is formed at the N-terminus of the alpha chain, which is derived from the carboxyl end of the proenzyme. The autoendoproteolytic cleavage occurs by a canonical serine protease mechanism, in which the side chain hydroxyl group of the serine supplies its oxygen atom to form the C-terminus of the beta chain, while the remainder of the serine residue undergoes an oxidative deamination to produce ammonia and the pyruvoyl prosthetic group on the alpha chain. During this reaction, the Ser that is part of the protease active site of the proenzyme becomes the pyruvoyl prosthetic group, which constitutes an essential element of the active site of the mature decarboxylase.

It localises to the cell membrane. It catalyses the reaction a 1,2-diacyl-sn-glycero-3-phospho-L-serine + H(+) = a 1,2-diacyl-sn-glycero-3-phosphoethanolamine + CO2. Its pathway is phospholipid metabolism; phosphatidylethanolamine biosynthesis; phosphatidylethanolamine from CDP-diacylglycerol: step 2/2. Its function is as follows. Catalyzes the formation of phosphatidylethanolamine (PtdEtn) from phosphatidylserine (PtdSer). This Francisella tularensis subsp. novicida (strain U112) protein is Phosphatidylserine decarboxylase proenzyme.